The chain runs to 116 residues: MKGENVFISPASISSVLTILYYGANGSTAEQLSKYVETEENTDKVSAQNISFKSINKVYGRYSAVFKDFFLGKIGDKFQTVDFTDCRTIDAINKCVDIFTEGKINPLLDEPLSPSN.

Belongs to the serpin family. Poxviruses subfamily.

The chain is Putative serine proteinase inhibitor 2 homolog first part from Vaccinia virus (strain Copenhagen) (VACV).